The primary structure comprises 389 residues: Multidrug resistance protein 1 (389 aa).

Helical transmembrane passes span 6–26, 42–62, 71–91, 102–122, 134–154, 160–180, 202–222, 243–263, 286–306, 336–356, and 358–378; these read ITLT…GLVI, AVGY…PIAG, KIMI…FGIG, MLGG…IADI, YMSA…GFLA, LPFF…ILTL, IFAP…FGLA, IAIM…VLFD, VFLL…VTVF, SMFT…LFDI, and VNYP…LTIA.

It belongs to the major facilitator superfamily. TCR/Tet family.

It is found in the cell membrane. In terms of biological role, energy-dependent efflux pump responsible for decreased drug accumulation in multi-drug-resistant cells. Probably uses a transmembrane proton gradient as the energy source. Causes the efflux of a variety of toxic substances, including such structurally diverse compounds as ethidium bromide, rhodamine and acridine dyes, tetraphenylphosphonium, puromycin, chloramphenicol, doxorubicin, and fluoroquinolone antibiotics. The polypeptide is Multidrug resistance protein 1 (bmr) (Bacillus subtilis (strain 168)).